A 68-amino-acid polypeptide reads, in one-letter code: Protein SlyX homolog (68 aa).

Belongs to the SlyX family.

This chain is Protein SlyX homolog, found in Pseudomonas putida (strain ATCC 700007 / DSM 6899 / JCM 31910 / BCRC 17059 / LMG 24140 / F1).